Consider the following 701-residue polypeptide: Ubiquitin thioesterase zranb1-A (701 aa).

RanBP2-type zinc fingers lie at residues 3–33 (EHGI…PRPS), 79–108 (PSSK…QRRT), and 143–173 (IKGQ…PTPN). Residues Cys10, Cys13, Cys24, Cys27, Cys85, Cys88, Cys99, and Cys102 each contribute to the Zn(2+) site. The span at 108-121 (TRSPTESPQSSGSG) shows a compositional bias: polar residues. The interval 108–129 (TRSPTESPQSSGSGLRSIPSPI) is disordered. Positions 150, 153, 164, and 167 each coordinate Zn(2+). Positions 198 to 219 (WRGGCSSSNSQRRSPPTSKRDS) are disordered. Polar residues predominate over residues 202–214 (CSSSNSQRRSPPT). 2 ANK repeats span residues 253 to 283 (RKTD…SGGD) and 306 to 333 (YTLV…QHAA). In terms of domain architecture, OTU spans 425-585 (LYALWNRTAG…RGHFSALVAM (161 aa)). Residue Cys436 is the Nucleophile of the active site. Catalysis depends on His578, which acts as the Proton acceptor.

The protein belongs to the peptidase C64 family.

Its subcellular location is the cytoplasm. It is found in the nucleus. The catalysed reaction is Thiol-dependent hydrolysis of ester, thioester, amide, peptide and isopeptide bonds formed by the C-terminal Gly of ubiquitin (a 76-residue protein attached to proteins as an intracellular targeting signal).. Its function is as follows. Ubiquitin thioesterase, which specifically hydrolyzes 'Lys-29'-linked and 'Lys-33'-linked diubiquitin. Also cleaves 'Lys-63'-linked chains, but with 40-fold less efficiency compared to 'Lys-29'-linked ones. Positive regulator of the Wnt signaling pathway that deubiquitinates apc protein, a negative regulator of Wnt-mediated transcription. Acts as a regulator of autophagy by mediating deubiquitination of pik3c3/vps34, thereby promoting autophagosome maturation. Plays a role in the regulation of cell morphology and cytoskeletal organization. Required in the stress fiber dynamics and cell migration. This Xenopus laevis (African clawed frog) protein is Ubiquitin thioesterase zranb1-A (zranb1-a).